A 572-amino-acid polypeptide reads, in one-letter code: Phosphoenolpyruvate-protein phosphotransferase (572 aa).

H190 (tele-phosphohistidine intermediate) is an active-site residue. Phosphoenolpyruvate is bound by residues R297 and R333. Positions 432 and 456 each coordinate Mg(2+). Phosphoenolpyruvate is bound by residues 455-456 and R466; that span reads ND. The active-site Proton donor is C503.

This sequence belongs to the PEP-utilizing enzyme family. As to quaternary structure, homodimer. Mg(2+) serves as cofactor.

The protein localises to the cytoplasm. The catalysed reaction is L-histidyl-[protein] + phosphoenolpyruvate = N(pros)-phospho-L-histidyl-[protein] + pyruvate. In terms of biological role, general (non sugar-specific) component of the phosphoenolpyruvate-dependent sugar phosphotransferase system (sugar PTS). This major carbohydrate active-transport system catalyzes the phosphorylation of incoming sugar substrates concomitantly with their translocation across the cell membrane. Enzyme I transfers the phosphoryl group from phosphoenolpyruvate (PEP) to the phosphoryl carrier protein (HPr). The polypeptide is Phosphoenolpyruvate-protein phosphotransferase (ptsI) (Listeria innocua serovar 6a (strain ATCC BAA-680 / CLIP 11262)).